The sequence spans 345 residues: Uroporphyrinogen decarboxylase (345 aa).

Substrate is bound by residues 26–30 (RQAGR), Asp-76, Tyr-151, Ser-205, and His-321.

The protein belongs to the uroporphyrinogen decarboxylase family. In terms of assembly, homodimer.

It is found in the cytoplasm. It catalyses the reaction uroporphyrinogen III + 4 H(+) = coproporphyrinogen III + 4 CO2. It functions in the pathway porphyrin-containing compound metabolism; protoporphyrin-IX biosynthesis; coproporphyrinogen-III from 5-aminolevulinate: step 4/4. Catalyzes the decarboxylation of four acetate groups of uroporphyrinogen-III to yield coproporphyrinogen-III. The sequence is that of Uroporphyrinogen decarboxylase from Phenylobacterium zucineum (strain HLK1).